The following is a 599-amino-acid chain: Riboflavin biosynthesis protein PYRR, chloroplastic (599 aa).

Residues 1-17 (MALSFRISSSSPLICRA) constitute a chloroplast transit peptide. One can recognise a CMP/dCMP-type deaminase domain in the interval 30–152 (TTDAAFIRRA…ELRSHGIEVN (123 aa)).

It in the C-terminal section; belongs to the YbiA family.

The protein localises to the plastid. It is found in the chloroplast. The enzyme catalyses 5-amino-6-(5-phospho-D-ribitylamino)uracil + NADP(+) = 5-amino-6-(5-phospho-D-ribosylamino)uracil + NADPH + H(+). The catalysed reaction is 2,5-diamino-6-hydroxy-4-(5-phosphoribosylamino)-pyrimidine + H2O = 2,5,6-triamino-4-hydroxypyrimidine + D-ribose 5-phosphate. It catalyses the reaction 5-amino-6-(5-phospho-D-ribosylamino)uracil + H2O = 5,6-diaminouracil + D-ribose 5-phosphate. It participates in cofactor biosynthesis; riboflavin biosynthesis; 5-amino-6-(D-ribitylamino)uracil from GTP: step 3/4. In terms of biological role, pyrimidine reductase involved in the riboflavin biosynthesis pathway. Also has a non-functional N-terminal deaminase domain that lacks the catalytically essential zinc-binding residues. Catalyzes the hydrolysis of the N-glycosidic bond in the first two intermediates of riboflavin biosynthesis, which are highly reactive metabolites, yielding relatively innocuous products. Thus, can divert a surplus of harmful intermediates into relatively harmless products and pre-empt the damage these intermediates would otherwise do. Helps maintain flavin levels. Has no activity against GTP, nucleoside monophosphates or ADP-ribose. The protein is Riboflavin biosynthesis protein PYRR, chloroplastic (PYRR) of Arabidopsis thaliana (Mouse-ear cress).